The sequence spans 229 residues: Dephospho-CoA kinase domain-containing protein (229 aa).

One can recognise a DPCK domain in the interval 3–207 (LVGLTGGIAS…DCMQFLIIRA (205 aa)). 8 to 15 (GGIASGKS) contacts ATP.

Belongs to the CoaE family.

The protein is Dephospho-CoA kinase domain-containing protein (dcakd) of Danio rerio (Zebrafish).